A 252-amino-acid chain; its full sequence is Endonuclease NucS (252 aa).

This sequence belongs to the NucS endonuclease family.

The protein localises to the cytoplasm. Its function is as follows. Cleaves both 3' and 5' ssDNA extremities of branched DNA structures. This is Endonuclease NucS from Thermococcus kodakarensis (strain ATCC BAA-918 / JCM 12380 / KOD1) (Pyrococcus kodakaraensis (strain KOD1)).